A 520-amino-acid chain; its full sequence is ATP-dependent clpX-like chaperone, mitochondrial (520 aa).

The transit peptide at 1-13 (MLKSASQNFFRAY) directs the protein to the mitochondrion. Residue 140–147 (GPSGSGKT) coordinates ATP.

Belongs to the ClpX chaperone family. As to quaternary structure, homohexamer that forms a ring structure; this hexamerization requires ATP binding. Interacts with HEM1.

It localises to the mitochondrion inner membrane. ATP-dependent unfoldase that stimulates the incorporation of the pyridoxal phosphate cofactor into 5-aminolevulinate synthase (HEM1), thereby activating 5-aminolevulinate (ALA) synthesis, the first step in heme biosynthesis. Up-regulates heme biosynthesis. This is ATP-dependent clpX-like chaperone, mitochondrial from Saccharomyces cerevisiae (strain ATCC 204508 / S288c) (Baker's yeast).